A 90-amino-acid chain; its full sequence is Envelope protein US9 (90 aa).

Residues Met-1–Met-67 lie on the Intravirion side of the membrane. An Internalization motif motif is present at residues Tyr-21 to Ala-24. An acidic region spans residues Glu-30–Glu-39. 2 positions are modified to phosphoserine; by host CK2: Ser-34 and Ser-36. Residues Val-68–Leu-88 traverse the membrane as a helical; Signal-anchor for type II membrane protein segment. At Leu-89–Arg-90 the chain is on the virion surface side.

It belongs to the alphaherpesvirinae envelope protein US9 family. In terms of processing, phosphorylated on serines within the acidic cluster, possibly by host CK2. Phosphorylation determines whether endocytosed viral US9 traffics to the trans-Golgi network or recycles to the cell membrane.

Its subcellular location is the virion membrane. The protein resides in the host Golgi apparatus membrane. It localises to the host smooth endoplasmic reticulum membrane. It is found in the host cell membrane. Essential for the anterograde spread of the infection throughout the host nervous system. Together with the gE/gI heterodimer, US9 is involved in the sorting and transport of viral structural components toward axon tips. This is Envelope protein US9 from Homo sapiens (Human).